Here is a 340-residue protein sequence, read N- to C-terminus: Ketol-acid reductoisomerase (NADP(+)) (340 aa).

One can recognise a KARI N-terminal Rossmann domain in the interval 1 to 182 (MRVYYDRDCD…GGGRSGIIET (182 aa)). Residues 24–27 (YGSQ), arginine 48, serine 51, serine 53, and 83–86 (DELQ) each bind NADP(+). Histidine 108 is a catalytic residue. Glycine 134 is an NADP(+) binding site. The region spanning 183-329 (NFREECETDL…ETLRGMMPWI (147 aa)) is the KARI C-terminal knotted domain. Residues aspartate 191, glutamate 195, glutamate 227, and glutamate 231 each contribute to the Mg(2+) site. Serine 252 lines the substrate pocket.

This sequence belongs to the ketol-acid reductoisomerase family. Mg(2+) is required as a cofactor.

It carries out the reaction (2R)-2,3-dihydroxy-3-methylbutanoate + NADP(+) = (2S)-2-acetolactate + NADPH + H(+). The enzyme catalyses (2R,3R)-2,3-dihydroxy-3-methylpentanoate + NADP(+) = (S)-2-ethyl-2-hydroxy-3-oxobutanoate + NADPH + H(+). It functions in the pathway amino-acid biosynthesis; L-isoleucine biosynthesis; L-isoleucine from 2-oxobutanoate: step 2/4. Its pathway is amino-acid biosynthesis; L-valine biosynthesis; L-valine from pyruvate: step 2/4. Functionally, involved in the biosynthesis of branched-chain amino acids (BCAA). Catalyzes an alkyl-migration followed by a ketol-acid reduction of (S)-2-acetolactate (S2AL) to yield (R)-2,3-dihydroxy-isovalerate. In the isomerase reaction, S2AL is rearranged via a Mg-dependent methyl migration to produce 3-hydroxy-3-methyl-2-ketobutyrate (HMKB). In the reductase reaction, this 2-ketoacid undergoes a metal-dependent reduction by NADPH to yield (R)-2,3-dihydroxy-isovalerate. The polypeptide is Ketol-acid reductoisomerase (NADP(+)) (Roseobacter denitrificans (strain ATCC 33942 / OCh 114) (Erythrobacter sp. (strain OCh 114))).